Consider the following 215-residue polypeptide: Pyrrolidone-carboxylate peptidase (215 aa).

Catalysis depends on residues Glu81, Cys144, and His168.

It belongs to the peptidase C15 family. Homotetramer.

The protein localises to the cytoplasm. It catalyses the reaction Release of an N-terminal pyroglutamyl group from a polypeptide, the second amino acid generally not being Pro.. Removes 5-oxoproline from various penultimate amino acid residues except L-proline. This is Pyrrolidone-carboxylate peptidase from Bacillus licheniformis (strain ATCC 14580 / DSM 13 / JCM 2505 / CCUG 7422 / NBRC 12200 / NCIMB 9375 / NCTC 10341 / NRRL NRS-1264 / Gibson 46).